The following is a 361-amino-acid chain: Probable G-protein coupled receptor 25 (361 aa).

Topologically, residues 1 to 39 (MAPTEPWSPSPGSAPWDYSGLDGLEELELCPAGDLPYGY) are extracellular. The helical transmembrane segment at 40-60 (VYIPALYLAAFAVGLLGNAFV) threads the bilayer. Topologically, residues 61-75 (VWLLAGRRGPRRLVD) are cytoplasmic. Residues 76–96 (TFVLHLAAADLGFVLTLPLWA) form a helical membrane-spanning segment. At 97 to 126 (AAAALGGRWPFGDGLCKLSSFALAGTRCAG) the chain is on the extracellular side. A helical membrane pass occupies residues 127–147 (ALLLAGMSVDRYLAVVKLLEA). The Cytoplasmic portion of the chain corresponds to 148–155 (RPLRTPRC). The chain crosses the membrane as a helical span at residues 156–176 (ALASCCGVWAVALLAGLPSLV). At 177-200 (YRGLQPLPGGQDSQCGEEPSHAFQ) the chain is on the extracellular side. Residues 201-220 (GLSLLLLLLTFVLPLVVTLF) form a helical membrane-spanning segment. Topologically, residues 221–242 (CYCRISRRLRRPPHVGRARRNS) are cytoplasmic. A helical membrane pass occupies residues 243-263 (LRIIFAIESTFVGSWLPFSAL). The Extracellular portion of the chain corresponds to 264 to 289 (RAVFHLARLGALPLPCPLLLALRWGL). A helical transmembrane segment spans residues 290–310 (TIATCLAFVNSCANPLIYLLL). At 311-361 (DRSFRARALDGACGRTGRLARRISSASSLSRDDSSVFRCRAQAANTASASW) the chain is on the cytoplasmic side.

It belongs to the G-protein coupled receptor 1 family.

It is found in the cell membrane. In terms of biological role, orphan receptor. This chain is Probable G-protein coupled receptor 25 (GPR25), found in Homo sapiens (Human).